The following is a 411-amino-acid chain: Actin-like protein 9 (411 aa).

Over residues 1–15 the composition is skewed to basic and acidic residues; it reads MDVNGPKRWEPHRSL. The interval 1 to 23 is disordered; that stretch reads MDVNGPKRWEPHRSLDLNPRSTP.

This sequence belongs to the actin family. As to quaternary structure, interacts with ACTL7A.

The protein localises to the cytoplasmic vesicle. Its subcellular location is the secretory vesicle. It is found in the acrosome. The protein resides in the cytoplasm. It localises to the cytoskeleton. The protein localises to the perinuclear theca. Testis-specic protein that plays an important role in fusion of proacrosomal vesicles and perinuclear theca formation. This Rattus norvegicus (Rat) protein is Actin-like protein 9 (Actl9).